The primary structure comprises 448 residues: Glutamyl-tRNA reductase (448 aa).

Residues 49-52 (TCNR), S109, 114-116 (ETQ), and Q120 contribute to the substrate site. C50 acts as the Nucleophile in catalysis. Residue 189-194 (GAGEMS) participates in NADP(+) binding.

Belongs to the glutamyl-tRNA reductase family. Homodimer.

It carries out the reaction (S)-4-amino-5-oxopentanoate + tRNA(Glu) + NADP(+) = L-glutamyl-tRNA(Glu) + NADPH + H(+). It participates in porphyrin-containing compound metabolism; protoporphyrin-IX biosynthesis; 5-aminolevulinate from L-glutamyl-tRNA(Glu): step 1/2. Functionally, catalyzes the NADPH-dependent reduction of glutamyl-tRNA(Glu) to glutamate 1-semialdehyde (GSA). This Staphylococcus aureus (strain bovine RF122 / ET3-1) protein is Glutamyl-tRNA reductase.